A 131-amino-acid chain; its full sequence is Small ribosomal subunit protein uS8 (131 aa).

The protein belongs to the universal ribosomal protein uS8 family. As to quaternary structure, part of the 30S ribosomal subunit. Contacts proteins S5 and S12.

Functionally, one of the primary rRNA binding proteins, it binds directly to 16S rRNA central domain where it helps coordinate assembly of the platform of the 30S subunit. In Burkholderia lata (strain ATCC 17760 / DSM 23089 / LMG 22485 / NCIMB 9086 / R18194 / 383), this protein is Small ribosomal subunit protein uS8.